Consider the following 385-residue polypeptide: MCIYASRQTVCPYLTPFKVKRPKSREMNSSDVNFSLLQSQPNVPAEFFWPEKDVAPSEGDLDLPIIDLSGFLNGNEAETQLAAKAVKKACMAHGTFLVVNHGFKSGLAEKALEISSLFFGLSKDEKLRAYRIPGNISGYTAGHSQRFSSNLPWNETLTLAFKKGPPHVVEDFLTSRLGNHRQEIGQVFQEFCDAMNGLVMDLMELLGISMGLKDRTYYRRFFEDGSGIFRCNYYPPCKQPEKALGVGPHNDPTAITVLLQDDVVGLEVFAAGSWQTVRPRPGALVVNVGDTFMALSNGNYRSCYHRAVVNKEKVRRSLVFFSCPREDKIIVPPPELVEGEEASRKYPDFTWAQLQKFTQSGYRVDNTTLHNFSSWLVSNSDKKST.

The region spanning 224-324 (DGSGIFRCNY…RRSLVFFSCP (101 aa)) is the Fe2OG dioxygenase domain. Fe cation-binding residues include His249, Asp251, and His305. Residue Arg315 is part of the active site.

It belongs to the iron/ascorbate-dependent oxidoreductase family. GA20OX subfamily. Fe(2+) serves as cofactor. The cofactor is L-ascorbate. As to expression, expressed in 3-day-old seedlings and siliques. Detected in dry seeds, roots, old leaves and inflorescences.

The catalysed reaction is gibberellin A12 + 2 2-oxoglutarate + 3 O2 + H(+) = gibberellin A9 + 2 succinate + 3 CO2 + 2 H2O. It catalyses the reaction gibberellin A53 + 2 2-oxoglutarate + 3 O2 + H(+) = gibberellin A20 + 2 succinate + 3 CO2 + 2 H2O. It functions in the pathway plant hormone biosynthesis; gibberellin biosynthesis. Key oxidase enzyme in the biosynthesis of gibberellin that catalyzes the conversion of GA12 and GA53 to GA9 and GA20 respectively, via a three-step oxidation at C-20 of the GA skeleton. This Arabidopsis thaliana (Mouse-ear cress) protein is Gibberellin 20 oxidase 5 (GA20OX5).